We begin with the raw amino-acid sequence, 317 residues long: Taste receptor type 2 member 7 (317 aa).

Topologically, residues 1-9 are extracellular; it reads MTDKVQTTL. Residues 10 to 30 form a helical membrane-spanning segment; sequence LFLAIGEFSVGILGNAFIGLV. Topologically, residues 31–55 are cytoplasmic; it reads NCMDWVKKRKIASIDLILTSLAISR. The helical transmembrane segment at 56-76 threads the bilayer; that stretch reads ICLLCVILLDCFMLVLYPDVY. Topologically, residues 77-94 are extracellular; sequence ATGKQMRIIDFFWTLTNH. A helical membrane pass occupies residues 95 to 115; it reads LSIWFATCLSIYYFFKIANFF. The Cytoplasmic portion of the chain corresponds to 116–128; that stretch reads HPLFLWMKWRIDR. The helical transmembrane segment at 129–149 threads the bilayer; it reads VISWILLGCMVLSVFINLPAT. The Extracellular segment spans residues 150–187; sequence ENLNADFRRCVKAKRKTNLTWSCRVTKAQHASTKLFLN. Residue Asn-167 is glycosylated (N-linked (GlcNAc...) asparagine). Residues 188–208 traverse the membrane as a helical segment; it reads LVTLLPFSVCLVSFFLLILSL. The Cytoplasmic portion of the chain corresponds to 209-235; the sequence is WRHIRRMQLSATGCRDPSTEAHVRALK. Residues 236 to 256 traverse the membrane as a helical segment; the sequence is AVISFLFLFIAYYLSFLIATS. Residues 257-266 lie on the Extracellular side of the membrane; the sequence is SYFIPETELA. The helical transmembrane segment at 267–287 threads the bilayer; the sequence is VIFGEFIALIYPSSHSFILIL. Residues 288-317 are Cytoplasmic-facing; sequence GNNKLRRASLKVLWTVMSILKGRKFQQKQI.

This sequence belongs to the G-protein coupled receptor T2R family.

Its subcellular location is the membrane. In terms of biological role, gustducin-coupled receptor implicated in the perception of bitter compounds in the oral cavity and the gastrointestinal tract. Signals through PLCB2 and the calcium-regulated cation channel TRPM5. In Papio hamadryas (Hamadryas baboon), this protein is Taste receptor type 2 member 7 (TAS2R7).